We begin with the raw amino-acid sequence, 160 residues long: Phosphopantetheine adenylyltransferase (160 aa).

A substrate-binding site is contributed by S9. Residues 9–10 (SF) and H17 each bind ATP. K41, I73, and K87 together coordinate substrate. ATP-binding positions include 88–90 (GLR), E98, and 122–128 (YSFVSSS).

It belongs to the bacterial CoaD family. As to quaternary structure, homohexamer. Requires Mg(2+) as cofactor.

The protein resides in the cytoplasm. It carries out the reaction (R)-4'-phosphopantetheine + ATP + H(+) = 3'-dephospho-CoA + diphosphate. Its pathway is cofactor biosynthesis; coenzyme A biosynthesis; CoA from (R)-pantothenate: step 4/5. Functionally, reversibly transfers an adenylyl group from ATP to 4'-phosphopantetheine, yielding dephospho-CoA (dPCoA) and pyrophosphate. The polypeptide is Phosphopantetheine adenylyltransferase (Mycolicibacterium vanbaalenii (strain DSM 7251 / JCM 13017 / BCRC 16820 / KCTC 9966 / NRRL B-24157 / PYR-1) (Mycobacterium vanbaalenii)).